The chain runs to 306 residues: Ribosomal RNA small subunit methyltransferase H (306 aa).

S-adenosyl-L-methionine is bound by residues 33–35, aspartate 51, phenylalanine 78, aspartate 96, and glutamine 103; that span reads GGY.

This sequence belongs to the methyltransferase superfamily. RsmH family.

It is found in the cytoplasm. The catalysed reaction is cytidine(1402) in 16S rRNA + S-adenosyl-L-methionine = N(4)-methylcytidine(1402) in 16S rRNA + S-adenosyl-L-homocysteine + H(+). Functionally, specifically methylates the N4 position of cytidine in position 1402 (C1402) of 16S rRNA. The protein is Ribosomal RNA small subunit methyltransferase H of Rickettsia typhi (strain ATCC VR-144 / Wilmington).